The following is an 88-amino-acid chain: Small ribosomal subunit protein bS20 (88 aa).

Disordered regions lie at residues 1 to 23 (MANT…VNKA) and 65 to 88 (GVMH…SLSA).

It belongs to the bacterial ribosomal protein bS20 family.

Its function is as follows. Binds directly to 16S ribosomal RNA. The polypeptide is Small ribosomal subunit protein bS20 (Rhizobium meliloti (strain 1021) (Ensifer meliloti)).